The chain runs to 552 residues: Cation/acetate symporter ActP (552 aa).

Transmembrane regions (helical) follow at residues 5 to 25 (FMML…DALT), 35 to 55 (IQAI…TYWA), 78 to 98 (GLAI…SALV), 105 to 125 (GLIY…LIAE), 151 to 171 (LSAC…MVGA), 185 to 205 (VAVI…GMLA), 208 to 228 (WVQI…AVMV), 264 to 284 (ISAL…PHIL), 305 to 325 (GFMG…ILLV), 357 to 377 (FFLG…VAGL), 407 to 427 (VSKI…ILFE), 431 to 451 (IAFM…PIII), 466 to 486 (IGGW…PTIW), and 499 to 519 (YDYP…FFSI).

This sequence belongs to the sodium:solute symporter (SSF) (TC 2.A.21) family.

It is found in the cell inner membrane. In terms of biological role, transports acetate. This chain is Cation/acetate symporter ActP, found in Pectobacterium carotovorum subsp. carotovorum (strain PC1).